A 49-amino-acid polypeptide reads, in one-letter code: Large ribosomal subunit protein bL34 (49 aa).

This sequence belongs to the bacterial ribosomal protein bL34 family.

This chain is Large ribosomal subunit protein bL34, found in Sorangium cellulosum (strain So ce56) (Polyangium cellulosum (strain So ce56)).